Consider the following 902-residue polypeptide: Cytosolic 10-formyltetrahydrofolate dehydrogenase (902 aa).

The tract at residues 1–310 (MKIAVIGQSL…PASQFFKGSA (310 aa)) is hydrolase domain. Serine 9 carries the post-translational modification Phosphoserine. At lysine 38 the chain carries N6-succinyllysine. Position 88–90 (88–90 (QFI)) interacts with (6R)-10-formyltetrahydrofolate. The Proton donor role is filled by histidine 106. Residue aspartate 142 participates in (6R)-10-formyltetrahydrofolate binding. The region spanning 318–395 (EEELATAEAV…DFIQLLVRKL (78 aa)) is the Carrier domain. Serine 354 is modified (O-(pantetheine 4'-phosphoryl)serine). The interval 417–902 (TLQMPYQLFI…LRIKTVTFEY (486 aa)) is aldehyde dehydrogenase domain. Residues 571–573 (IPW) and 597–600 (KPAQ) each bind NADP(+). 2 positions are modified to phosphoserine: serine 629 and serine 631. Residues 630 to 635 (GSLVGQ) and 650 to 651 (GS) contribute to the NADP(+) site. Residue lysine 660 is modified to N6-succinyllysine. Glutamate 673 functions as the Proton acceptor in the catalytic mechanism. 673–674 (EL) is an NADP(+) binding site. Catalysis depends on cysteine 707, which acts as the Proton donor. Lysine 757 serves as a coordination point for NADP(+). Lysine 767 bears the N6-succinyllysine mark. 804–806 (ESF) lines the NADP(+) pocket. Residue serine 825 is modified to Phosphoserine. Lysine 882 carries the post-translational modification N6-acetyllysine.

In the N-terminal section; belongs to the GART family. This sequence in the C-terminal section; belongs to the aldehyde dehydrogenase family. ALDH1L subfamily. Homotetramer. In terms of processing, phosphopantetheinylation at Ser-354 by AASDHPPT is required for the formyltetrahydrofolate dehydrogenase activity. Highly expressed in liver (at protein level). Also expressed in pancreas, brain and lung (at protein level).

The protein localises to the cytoplasm. Its subcellular location is the cytosol. It carries out the reaction (6R)-10-formyltetrahydrofolate + NADP(+) + H2O = (6S)-5,6,7,8-tetrahydrofolate + CO2 + NADPH + H(+). Functionally, cytosolic 10-formyltetrahydrofolate dehydrogenase that catalyzes the NADP(+)-dependent conversion of 10-formyltetrahydrofolate to tetrahydrofolate and carbon dioxide. May also have an NADP(+)-dependent aldehyde dehydrogenase activity towards formaldehyde, acetaldehyde, propionaldehyde, and benzaldehyde. This Mus musculus (Mouse) protein is Cytosolic 10-formyltetrahydrofolate dehydrogenase.